The chain runs to 460 residues: MATGKIIQVIGAVVDVEFPQDAVPKVYNALEVKGGATKLVLEVQQQLGGGVVRCIAMGSSDGLRRGLDVEDQNHPIEVPVGKATLGRIMNVLGDPVDMKGEIGEEERWAIHRAAPSYEDLSNSQELLETGIKVIDLICPFAKGGKVGLFGGAGVGKTVNMMELIRNIAIEHSGYSVFAGVGERTREGNDFYHEMTDSNVLDKVSLVYGQMNEPPGNRLRVALTGLTMAEKFRDEGRDVLLFIDNIYRYTLAGTEVSALLGRMPSAVGYQPTLAEEMGVLQERITSTKTGSITSVQAVYVPADDLTDPSPATTFAHLDATVVLSRQIASLGIYPAVDPLDSTSRQLDPLVVGQEHYDTARGVQSILQRYQELKDIIAILGMDELSEEDKLVVARARKIQRFLSQPFFVAEVFTGSPGKYVSLKDTIMGFKGIMNGDYDHLPEQAFYMVGSIDEAVEKAKKL.

150 to 157 serves as a coordination point for ATP; the sequence is GGAGVGKT.

Belongs to the ATPase alpha/beta chains family. F-type ATPases have 2 components, CF(1) - the catalytic core - and CF(0) - the membrane proton channel. CF(1) has five subunits: alpha(3), beta(3), gamma(1), delta(1), epsilon(1). CF(0) has three main subunits: a(1), b(2) and c(9-12). The alpha and beta chains form an alternating ring which encloses part of the gamma chain. CF(1) is attached to CF(0) by a central stalk formed by the gamma and epsilon chains, while a peripheral stalk is formed by the delta and b chains.

It is found in the cell inner membrane. The enzyme catalyses ATP + H2O + 4 H(+)(in) = ADP + phosphate + 5 H(+)(out). In terms of biological role, produces ATP from ADP in the presence of a proton gradient across the membrane. The catalytic sites are hosted primarily by the beta subunits. This is ATP synthase subunit beta from Edwardsiella ictaluri (strain 93-146).